Consider the following 664-residue polypeptide: Protein cueball (664 aa).

The first 21 residues, 1-21, serve as a signal peptide directing secretion; that stretch reads MRNLGIAVTFAVLLVIGYVTA. Topologically, residues 22-552 are extracellular; it reads LEWDAVVTTD…VTYCKNSFNR (531 aa). 3 N-linked (GlcNAc...) asparagine glycosylation sites follow: Asn-40, Asn-140, and Asn-188. 3 LDL-receptor class B repeats span residues 115-157, 168-211, and 212-257; these read RKLY…ENHD, RHLY…DHYN, and NRIY…NSQY. EGF-like domains lie at 367–399, 402–438, and 473–510; these read EIPICNNFCVHGECVVGADSRPMCKCHAEFEGE, DRNICDGYCLNNGRCALSATGQRSCTCSKNFSGARCE, and EEYTCNNYCLHDGTCILNNDTMLVECRCGSEYTGKRCE. 8 cysteine pairs are disulfide-bonded: Cys-371–Cys-380, Cys-375–Cys-390, Cys-406–Cys-416, Cys-410–Cys-426, Cys-428–Cys-437, Cys-477–Cys-487, Cys-481–Cys-498, and Cys-500–Cys-509. Asn-431 is a glycosylation site (N-linked (GlcNAc...) asparagine). An N-linked (GlcNAc...) asparagine glycan is attached at Asn-491. Asn-551 carries N-linked (GlcNAc...) asparagine glycosylation. Residues 553–573 form a helical membrane-spanning segment; the sequence is TVVYVSLAFTASLVTLVTILC. The Cytoplasmic segment spans residues 574–664; sequence TVRRMYERNR…KLPSCVAEKN (91 aa).

The protein belongs to the cueball family.

Its subcellular location is the cell membrane. Has a role in spermatogenesis and oogenesis. The polypeptide is Protein cueball (Aedes aegypti (Yellowfever mosquito)).